Reading from the N-terminus, the 1722-residue chain is Lymphocyte antigen 75 (1722 aa).

Positions 1 to 27 (MGTRRVTPGCAAGLLVLLLRCFGLAEP) are cleaved as a signal peptide. Over 28–1666 (SEFSGDDSFT…VVCKVPLSPD (1639 aa)) the chain is Extracellular. In terms of domain architecture, Ricin B-type lectin spans 32 to 182 (GDDSFTIVNE…FLVGETWHHD (151 aa)). N-linked (GlcNAc...) asparagine glycosylation is present at Asn135. The Fibronectin type-II domain maps to 164 to 211 (SYGRPCEFPFLVGETWHHDCIRDENHSGPWCATTLNYEYDQKWGICLK). Intrachain disulfides connect Cys169–Cys194, Cys183–Cys209, Cys247–Cys340, and Cys317–Cys332. In terms of domain architecture, C-type lectin 1 spans 225–341 (QIGSCYQFNN…CEAQQPYVCK (117 aa)). N-linked (GlcNAc...) asparagine glycans are attached at residues Asn345 and Asn377. C-type lectin domains follow at residues 368-486 (QNGF…YVCK), 493-625 (NDTR…ICKK), and 652-791 (SNLS…WVCQ). 2 cysteine pairs are disulfide-bonded: Cys389/Cys485 and Cys462/Cys477. N-linked (GlcNAc...) asparagine glycosylation occurs at Asn529. Cystine bridges form between Cys597–Cys614, Cys678–Cys790, and Cys752–Cys782. 2 N-linked (GlcNAc...) asparagine glycosylation sites follow: Asn843 and Asn865. Phosphotyrosine is present on Tyr933. Residues Asn934 and Asn1076 are each glycosylated (N-linked (GlcNAc...) asparagine). C-type lectin domains lie at 958-1091 (FQNK…LCQK) and 1110-1222 (YLNN…ICYY). Intrachain disulfides connect Cys1060/Cys1080 and Cys1197/Cys1211. Asn1225, Asn1320, and Asn1392 each carry an N-linked (GlcNAc...) asparagine glycan. A C-type lectin 7 domain is found at 1251-1374 (FQNSCYNFMI…VIDETLHFYQ (124 aa)). 2 consecutive C-type lectin domains span residues 1401 to 1513 (YEDG…ICYK) and 1542 to 1661 (YGDH…VCKV). A disulfide bond links Cys1488 and Cys1502. Residues Asn1593 and Asn1626 are each glycosylated (N-linked (GlcNAc...) asparagine). A disulfide bond links Cys1635 and Cys1650. Residues 1667-1691 (YRGIAVLFAVLSVLALISGLIWFLV) traverse the membrane as a helical segment. Over 1692–1722 (QRNHFRWTGLSSVRYEHGANEDEVMLPSFHD) the chain is Cytoplasmic. Phosphoserine is present on residues Ser1703 and Ser1719.

As to expression, expressed in the thymus and cultured bone marrow cells.

The protein resides in the membrane. Functionally, acts as an endocytic receptor to direct captured antigens from the extracellular space to a specialized antigen-processing compartment. Causes reduced proliferation of B lymphocytes. This is Lymphocyte antigen 75 (LY75) from Mesocricetus auratus (Golden hamster).